A 147-amino-acid chain; its full sequence is 3-hydroxyacyl-[acyl-carrier-protein] dehydratase FabZ (147 aa).

Residue H50 is part of the active site.

This sequence belongs to the thioester dehydratase family. FabZ subfamily.

Its subcellular location is the cytoplasm. The catalysed reaction is a (3R)-hydroxyacyl-[ACP] = a (2E)-enoyl-[ACP] + H2O. In terms of biological role, involved in unsaturated fatty acids biosynthesis. Catalyzes the dehydration of short chain beta-hydroxyacyl-ACPs and long chain saturated and unsaturated beta-hydroxyacyl-ACPs. This chain is 3-hydroxyacyl-[acyl-carrier-protein] dehydratase FabZ, found in Lactiplantibacillus plantarum (strain ATCC BAA-793 / NCIMB 8826 / WCFS1) (Lactobacillus plantarum).